A 342-amino-acid polypeptide reads, in one-letter code: N-acetyl-gamma-glutamyl-phosphate reductase (342 aa).

The active site involves Cys149.

It belongs to the NAGSA dehydrogenase family. Type 1 subfamily.

It localises to the cytoplasm. The catalysed reaction is N-acetyl-L-glutamate 5-semialdehyde + phosphate + NADP(+) = N-acetyl-L-glutamyl 5-phosphate + NADPH + H(+). It functions in the pathway amino-acid biosynthesis; L-arginine biosynthesis; N(2)-acetyl-L-ornithine from L-glutamate: step 3/4. Functionally, catalyzes the NADPH-dependent reduction of N-acetyl-5-glutamyl phosphate to yield N-acetyl-L-glutamate 5-semialdehyde. This Nitrosomonas eutropha (strain DSM 101675 / C91 / Nm57) protein is N-acetyl-gamma-glutamyl-phosphate reductase.